A 180-amino-acid polypeptide reads, in one-letter code: Large ribosomal subunit protein uL6 (180 aa).

It belongs to the universal ribosomal protein uL6 family. In terms of assembly, part of the 50S ribosomal subunit.

In terms of biological role, this protein binds to the 23S rRNA, and is important in its secondary structure. It is located near the subunit interface in the base of the L7/L12 stalk, and near the tRNA binding site of the peptidyltransferase center. The protein is Large ribosomal subunit protein uL6 of Thermoanaerobacter sp. (strain X514).